Here is a 421-residue protein sequence, read N- to C-terminus: Polygalacturonase (421 aa).

Residues 1 to 20 (MKFSTAIIVSFLFIADFCAA) form the signal peptide. N-linked (GlcNAc...) asparagine glycans are attached at residues N156 and N180. 2 PbH1 repeats span residues 178–204 (CKNI…HMGK) and 205–226 (STDV…SIGD). D219 serves as the catalytic Proton donor. The active site involves H242. PbH1 repeat units lie at residues 258–279 (VEGI…RIKT) and 289–310 (VSDI…IIDQ). An N-linked (GlcNAc...) asparagine glycan is attached at N265. The tract at residues 394 to 421 (PGAPAASTTATPAASKTATPAAGKSPAK) is disordered.

This sequence belongs to the glycosyl hydrolase 28 family. Pollen specific.

It localises to the secreted. The protein localises to the cell wall. The enzyme catalyses (1,4-alpha-D-galacturonosyl)n+m + H2O = (1,4-alpha-D-galacturonosyl)n + (1,4-alpha-D-galacturonosyl)m.. May function in the depolymerization of the pectin in its walls during pollen tube elongation, or in that of the pistil during pollination. The chain is Polygalacturonase from Medicago sativa (Alfalfa).